A 462-amino-acid polypeptide reads, in one-letter code: MSKLWGGRFTEEAEAWVEEFGASISFDQQLVNQDINGSIAHVTMLAKQGIVTKEEAEKIKIGLQYLLEEAKQNKLHFSVEAEDIHLNIEKMLIEKIGEVGGKLHTGRSRNDQVATDMHLYLKEKVEHIIKATKQLQTVLVHQAENNIETIMPGYTHLQRAQPISFAHHILAYFWMLERDVNRYEDSLKRINISPLGAGALAGTTFPIDREYSAELLGFNGMYENSLDAVSDRDFILEFLSNSSMLMMHLSRFCEELILWSSQEFQFIEMSDQYATGSSIMPQKKNPDMAELIRGKTGRVYGNLFSLLTVMKGLPLAYNKDLQEDKEGMFDTVKTVEGCLHIMAGMLETMTVNKEKMGQAVTQDFSNATEIADYLANKGLPFRQAHEIVGKLVLHCTQKGIYLVDVPLATYKEMSSLFEEDLYEVLSPYAAVKRRNSAGGTGFEQIEKALEKAKGLTKEVIKN.

The protein belongs to the lyase 1 family. Argininosuccinate lyase subfamily.

It localises to the cytoplasm. The catalysed reaction is 2-(N(omega)-L-arginino)succinate = fumarate + L-arginine. The protein operates within amino-acid biosynthesis; L-arginine biosynthesis; L-arginine from L-ornithine and carbamoyl phosphate: step 3/3. This chain is Argininosuccinate lyase, found in Bacillus cereus (strain ATCC 10987 / NRS 248).